A 671-amino-acid chain; its full sequence is Probable potassium transport system protein Kup (671 aa).

The tract at residues 1-43 is disordered; it reads MSQIPSPNDPASTGAAPSSAAVPAGPSATPAPSPTAGFSLPGH. Residues 10–37 show a composition bias toward low complexity; it reads PASTGAAPSSAAVPAGPSATPAPSPTAG. Helical transmembrane passes span 52 to 72, 92 to 112, 147 to 167, 181 to 201, 209 to 229, 255 to 275, 291 to 311, 323 to 343, 381 to 401, 407 to 427, 441 to 461, and 465 to 485; these read LAAL…TSPL, VLGV…FKYM, LMLG…TPAI, PAME…LFLF, VGAV…VLGV, GWHG…GEAL, WLGL…ALLL, LLAP…AAIV, IYLP…VLGF, LASA…LLFH, AWPL…ANVV, and DGGW…STWK.

Belongs to the HAK/KUP transporter (TC 2.A.72) family.

The protein resides in the cell inner membrane. It catalyses the reaction K(+)(in) + H(+)(in) = K(+)(out) + H(+)(out). Its function is as follows. Transport of potassium into the cell. Likely operates as a K(+):H(+) symporter. In Anaeromyxobacter dehalogenans (strain 2CP-1 / ATCC BAA-258), this protein is Probable potassium transport system protein Kup.